Reading from the N-terminus, the 529-residue chain is Bifunctional purine biosynthesis protein PurH (529 aa).

In terms of domain architecture, MGS-like spans 1–148; that stretch reads MQQRRPVRRA…KNHKDVAIVV (148 aa).

The protein belongs to the PurH family.

It carries out the reaction (6R)-10-formyltetrahydrofolate + 5-amino-1-(5-phospho-beta-D-ribosyl)imidazole-4-carboxamide = 5-formamido-1-(5-phospho-D-ribosyl)imidazole-4-carboxamide + (6S)-5,6,7,8-tetrahydrofolate. The enzyme catalyses IMP + H2O = 5-formamido-1-(5-phospho-D-ribosyl)imidazole-4-carboxamide. It functions in the pathway purine metabolism; IMP biosynthesis via de novo pathway; 5-formamido-1-(5-phospho-D-ribosyl)imidazole-4-carboxamide from 5-amino-1-(5-phospho-D-ribosyl)imidazole-4-carboxamide (10-formyl THF route): step 1/1. The protein operates within purine metabolism; IMP biosynthesis via de novo pathway; IMP from 5-formamido-1-(5-phospho-D-ribosyl)imidazole-4-carboxamide: step 1/1. In Salmonella enteritidis PT4 (strain P125109), this protein is Bifunctional purine biosynthesis protein PurH.